Reading from the N-terminus, the 226-residue chain is ADP-ribosylation factor-like protein 6-interacting protein 6 (226 aa).

A disordered region spans residues 1-49 (MSFVESWRFAGARRRRQVTPGPATRPGYSDYTQGDSWGEGEGDEDEGCD). A phosphoserine mark is found at Ser2 and Ser36. The segment covering 38–48 (GEGEGDEDEGC) has biased composition (acidic residues). Phosphoserine is present on residues Ser60, Ser65, and Ser80. Helical transmembrane passes span 111–131 (ILCS…AYMI), 150–170 (LLGF…CCSF), and 205–225 (MGYS…AWCL).

Belongs to the ARL6IP6 family.

It localises to the nucleus inner membrane. In Mus musculus (Mouse), this protein is ADP-ribosylation factor-like protein 6-interacting protein 6 (Arl6ip6).